Here is a 1032-residue protein sequence, read N- to C-terminus: Kinesin heavy chain isoform 5A (1032 aa).

Residue A2 is modified to N-acetylalanine. The Kinesin motor domain occupies 9–327 (SIKVLCRFRP…LMFGQRAKTI (319 aa)). 86 to 93 (GQTSSGKT) is an ATP binding site. The interval 174 to 315 (VSSPEEILDV…PSSYNDAETK (142 aa)) is microtubule-binding. A necessary for interaction with ZFYVE27 region spans residues 271-361 (EGTKSYVPYR…KTKAQKETIA (91 aa)). Residues 331–906 (ASVNLELTAE…VDRIKEAVRY (576 aa)) are a coiled coil. The segment at 353-1032 (TKAQKETIAK…FPLHQETAAS (680 aa)) is interaction with BICD2. T397 is subject to Phosphothreonine. Disordered regions lie at residues 906–939 (YKSS…YGTR) and 978–1010 (SGAT…RSDL). A globular region spans residues 907-1032 (KSSGKRGHSA…FPLHQETAAS (126 aa)). Over residues 978 to 989 (SGATSSGGPLAS) the composition is skewed to low complexity. The segment covering 991 to 1003 (QKANMDNGNATDI) has biased composition (polar residues).

The protein belongs to the TRAFAC class myosin-kinesin ATPase superfamily. Kinesin family. Kinesin subfamily. In terms of assembly, oligomer composed of two heavy chains and two light chains. Interacts with GRIP1. Interacts with FMR1 (via C-terminus); this interaction is increased in a mGluR-dependent manner. Interacts with ZFYVE27. Interacts with VAPA, VAPB, SURF4, RAB11A (GDP-bound form), RAB11B (GDP-bound form) and RTN3 in a ZFYVE27-dependent manner. Interacts with BORCS5. Interacts with BICD2. Interacts with DTNB. Distributed throughout the CNS but is highly enriched in subsets of neurons.

Its subcellular location is the cytoplasm. It localises to the perinuclear region. The protein resides in the cytoskeleton. The protein localises to the perikaryon. The catalysed reaction is ATP + H2O + a kinesin associated with a microtubule at position (n) = ADP + phosphate a kinesin associated with a microtubule at position (n+1, toward the plus end).. In terms of biological role, microtubule-dependent motor required for slow axonal transport of neurofilament proteins (NFH, NFM and NFL). Can induce formation of neurite-like membrane protrusions in non-neuronal cells in a ZFYVE27-dependent manner. The ZFYVE27-KIF5A complex contributes to the vesicular transport of VAPA, VAPB, SURF4, RAB11A, RAB11B and RTN3 proteins in neurons. Required for anterograde axonal transportation of MAPK8IP3/JIP3 which is essential for MAPK8IP3/JIP3 function in axon elongation. This is Kinesin heavy chain isoform 5A from Homo sapiens (Human).